Here is a 289-residue protein sequence, read N- to C-terminus: Probable protein phosphatase 2C 39 (289 aa).

One can recognise a PPM-type phosphatase domain in the interval 41-288 (THGFHLVKGK…DDISVVVVKF (248 aa)). The Mn(2+) site is built by D78, G79, D240, and D279.

Belongs to the PP2C family. The cofactor is Mg(2+). Mn(2+) serves as cofactor.

The enzyme catalyses O-phospho-L-seryl-[protein] + H2O = L-seryl-[protein] + phosphate. It catalyses the reaction O-phospho-L-threonyl-[protein] + H2O = L-threonyl-[protein] + phosphate. This Arabidopsis thaliana (Mouse-ear cress) protein is Probable protein phosphatase 2C 39.